We begin with the raw amino-acid sequence, 405 residues long: Tryptophan synthase beta chain (405 aa).

An N6-(pyridoxal phosphate)lysine modification is found at Lys-86.

It belongs to the TrpB family. Tetramer of two alpha and two beta chains. Requires pyridoxal 5'-phosphate as cofactor.

The enzyme catalyses (1S,2R)-1-C-(indol-3-yl)glycerol 3-phosphate + L-serine = D-glyceraldehyde 3-phosphate + L-tryptophan + H2O. The protein operates within amino-acid biosynthesis; L-tryptophan biosynthesis; L-tryptophan from chorismate: step 5/5. In terms of biological role, the beta subunit is responsible for the synthesis of L-tryptophan from indole and L-serine. This chain is Tryptophan synthase beta chain, found in Shewanella piezotolerans (strain WP3 / JCM 13877).